The following is a 455-amino-acid chain: Phosphoglucosamine mutase (455 aa).

S104 (phosphoserine intermediate) is an active-site residue. Mg(2+) is bound by residues S104, D253, D255, and D257. S104 is subject to Phosphoserine.

The protein belongs to the phosphohexose mutase family. Mg(2+) serves as cofactor. In terms of processing, activated by phosphorylation.

The catalysed reaction is alpha-D-glucosamine 1-phosphate = D-glucosamine 6-phosphate. In terms of biological role, catalyzes the conversion of glucosamine-6-phosphate to glucosamine-1-phosphate. The polypeptide is Phosphoglucosamine mutase (Psychrobacter arcticus (strain DSM 17307 / VKM B-2377 / 273-4)).